A 235-amino-acid chain; its full sequence is Probable membrane-associated kinase regulator 6 (235 aa).

The tract at residues Ser108–Ser140 is disordered. Positions Gly130 to Ser140 are enriched in polar residues.

Its subcellular location is the cell membrane. In terms of biological role, may be involved in abscisic acid signaling by acting as a kinase regulator. The chain is Probable membrane-associated kinase regulator 6 (MAKR6) from Arabidopsis thaliana (Mouse-ear cress).